The chain runs to 105 residues: MHKISLQFFFVDNYFFFWKQSKYQSIYAIQIRCFFLTVNRTPIPKQTFSLIVFYILIMIIQHLKEIHYLISASAKLLLASNYLLELLISHNIQFSPIRSFFIIMV.

Has a role in meiosis. This Schizosaccharomyces pombe (strain 972 / ATCC 24843) (Fission yeast) protein is Meiotically up-regulated gene 52 protein (mug52).